Here is an 854-residue protein sequence, read N- to C-terminus: N-terminal acetyltransferase A complex subunit NAT1 (854 aa).

Ser2 carries the N-acetylserine modification. 7 TPR repeats span residues 20 to 53 (ENDQ…DGSH), 54 to 87 (VDSL…IEGA), 91 to 124 (PICC…GSTN), 126 to 162 (QIYR…RANW), 241 to 274 (FGLL…NPDN), 384 to 417 (IWTN…TPTL), and 452 to 485 (RFIN…DDSV). Residues 623–667 (LKRKSDSLDENSDEIQNNGQNSSSQKKKAKKEAAAMNKRKETEAK) adopt a coiled-coil conformation. The segment at 626-668 (KSDSLDENSDEIQNNGQNSSSQKKKAKKEAAAMNKRKETEAKS) is disordered. Phosphoserine is present on Ser674. The TPR 8 repeat unit spans residues 728-761 (ALCFASLNKFAKRFGTTSGLFGSMAIVLLHATRN).

In terms of assembly, component of the N-terminal acetyltransferase A (NatA) complex, which is composed of ARD1, NAT1 and NAT5. Can self-associate. NAT1 associates with the nascent polypeptide chain and the ribosome. In terms of processing, the N-terminus is blocked.

Its subcellular location is the cytoplasm. Its function is as follows. Non-catalytic component of the NatA N-terminal acetyltransferase, which catalyzes acetylation of proteins beginning with Met-Ser, Met-Gly and Met-Ala. N-acetylation plays a role in normal eukaryotic translation and processing, protect against proteolytic degradation and protein turnover. NAT1 anchors ARD1 and NAT5 to the ribosome and may present the N termini of nascent polypeptides for acetylation. The chain is N-terminal acetyltransferase A complex subunit NAT1 (NAT1) from Saccharomyces cerevisiae (strain ATCC 204508 / S288c) (Baker's yeast).